The chain runs to 347 residues: Trace amine-associated receptor 4 (347 aa).

At 1–37 the chain is on the extracellular side; it reads MNTPDPWSSPEVQFCFAAANSSCPRKARPALVVCAMY. Residue asparagine 20 is glycosylated (N-linked (GlcNAc...) asparagine). 2 disulfides stabilise this stretch: cysteine 23-cysteine 187 and cysteine 106-cysteine 191. A helical transmembrane segment spans residues 38–58; that stretch reads LIMIGAIVMTMLGNMAVIISI. Residues 59–69 are Cytoplasmic-facing; it reads AHFKQLHSPTN. Residues 70 to 90 form a helical membrane-spanning segment; that stretch reads FLILSMATTDFLLSCVVMPFS. The Extracellular portion of the chain corresponds to 91–110; that stretch reads MIRSIESCWYFGDLFCKVHS. Residues 111-129 traverse the membrane as a helical segment; it reads CCDIMLCTTSIFHLCFISV. At 130 to 149 the chain is on the cytoplasmic side; that stretch reads DRHYAVCDPLHYVTQITTRV. Residues 150–170 traverse the membrane as a helical segment; that stretch reads VGVFLLISWSVPIFFAFGLVF. Over 171–197 the chain is Extracellular; sequence SELNLIGAEDFVAAIDCTGLCVLIFNK. The segment at 175 to 188 is extracellular Loop 2 (ECL2); it reads LIGAEDFVAAIDCT. Residues 198–218 traverse the membrane as a helical segment; sequence LWGVLASFIAFFLPGTVMVGI. Over 219-260 the chain is Cytoplasmic; sequence YIHIFTVAQKHARQIGTGPRTKQALSESKMKATSKKESKATK. A helical membrane pass occupies residues 261–281; the sequence is TLSIVMGVFVLCWLPFFVLTI. Residues 282–296 lie on the Extracellular side of the membrane; it reads TDPFIDFTTPEDLYN. Residues 297–317 form a helical membrane-spanning segment; that stretch reads VFLWLGYFNSTFNPIIYGMFY. The Cytoplasmic portion of the chain corresponds to 318-347; sequence PWFRKALRMIVTGTIFRSDSSTSSLHPAHP.

It belongs to the G-protein coupled receptor 1 family. Specifically expressed in neurons of the olfactory epithelium, to discrete glomeruli predominantly localized to a confined bulb region. Present in the dorsal area of the main olfactory epithelium.

It is found in the cell membrane. Functionally, olfactory receptor specific for 2-phenylethylamine, a trace amine present at high concentration in the urine of carnivore species, playing a key role in fear and avoidance responses. 2-phenylethylamine acts as a kairomone in the chemical detection of carnivore odor and triggers fear in mice. This receptor is probably mediated by the G(s)-class of G-proteins which activate adenylate cyclase. The protein is Trace amine-associated receptor 4 of Mus musculus (Mouse).